Here is a 361-residue protein sequence, read N- to C-terminus: 5-formaminoimidazole-4-carboxamide-1-(beta)-D-ribofuranosyl 5'-monophosphate synthetase (361 aa).

The 5-amino-1-(5-phospho-beta-D-ribosyl)imidazole-4-carboxamide site is built by histidine 27 and serine 94. The ATP-grasp domain occupies 116-348 (RRILRWESER…MGQRIAREIK (233 aa)). Residues 156–166 (KFPGARGGRGY), 199–202 (EEYV), and glutamate 230 each bind ATP. Position 258 (asparagine 258) interacts with 5-amino-1-(5-phospho-beta-D-ribosyl)imidazole-4-carboxamide. Residues glutamine 297 and glutamate 310 each coordinate Mg(2+).

The protein belongs to the phosphohexose mutase family. As to quaternary structure, homohexamer. Dimer of trimers. Mg(2+) serves as cofactor. It depends on Mn(2+) as a cofactor.

The enzyme catalyses 5-amino-1-(5-phospho-beta-D-ribosyl)imidazole-4-carboxamide + formate + ATP = 5-formamido-1-(5-phospho-D-ribosyl)imidazole-4-carboxamide + ADP + phosphate. It functions in the pathway purine metabolism; IMP biosynthesis via de novo pathway; 5-formamido-1-(5-phospho-D-ribosyl)imidazole-4-carboxamide from 5-amino-1-(5-phospho-D-ribosyl)imidazole-4-carboxamide (formate route): step 1/1. Its activity is regulated as follows. Inhibited by ADP. In terms of biological role, catalyzes the ATP- and formate-dependent formylation of 5-aminoimidazole-4-carboxamide-1-beta-d-ribofuranosyl 5'-monophosphate (AICAR) to 5-formaminoimidazole-4-carboxamide-1-beta-d-ribofuranosyl 5'-monophosphate (FAICAR) in the absence of folates. The chain is 5-formaminoimidazole-4-carboxamide-1-(beta)-D-ribofuranosyl 5'-monophosphate synthetase from Methanocaldococcus jannaschii (strain ATCC 43067 / DSM 2661 / JAL-1 / JCM 10045 / NBRC 100440) (Methanococcus jannaschii).